The chain runs to 510 residues: Peroxidase 2 (510 aa).

A signal peptide spans 1-19 (MRLTYLPLFAGIAIQSASA). Positions 20 to 58 (LPDFFKSSVLKPRRTNSLLINPDAQPDLPTAQQASTAAA) are excised as a propeptide. Asp228 serves as the catalytic Proton acceptor. His362 lines the heme pocket.

In terms of assembly, homodimer. The cofactor is heme b.

Peroxidase capable of degrading beta-carotene. The protein is Peroxidase 2 of Mycetinis scorodonius (Garlic mushroom).